Consider the following 363-residue polypeptide: MTVSADFTPLLHKAALGRPLDSHEAETAFHAIMAGEVDPVQLAAFLTALKLRGETFAELTGAVQAVRHHMTVLPDVPAGAIDVCGTGGDGLKTLNVSTAVAFVLAGLGVPVAKHGNRALSSASGATDVLEVLGIPPTDDLELQGRRLREDGLVFLAAPQHHPAMRHAAPVRKALGFRTLFNLLGPLCNPAQVRHQLIGVFDGRWCEPVARALGALGSLSVWVVHGSTEEGGSDELTLAGPSQVSAWQDETLFSFRIEPDMAGLAAAPISAIRGGDAQTNAAALLALLDGAGGAYRDTVLLNAAAALHVAGRGDIVKAGVIDVPAFRRNVGMAADSIDRGLARAALEAARMSAHSIAPKDAGRS.

5-phospho-alpha-D-ribose 1-diphosphate-binding positions include G85, 88–89 (GD), T93, 95–98 (NVST), 113–121 (KHGNRALSS), and A125. Position 85 (G85) interacts with anthranilate. Residue S97 participates in Mg(2+) binding. N116 is a binding site for anthranilate. R171 lines the anthranilate pocket. Mg(2+)-binding residues include D233 and E234.

This sequence belongs to the anthranilate phosphoribosyltransferase family. Homodimer. Mg(2+) serves as cofactor.

The enzyme catalyses N-(5-phospho-beta-D-ribosyl)anthranilate + diphosphate = 5-phospho-alpha-D-ribose 1-diphosphate + anthranilate. Its pathway is amino-acid biosynthesis; L-tryptophan biosynthesis; L-tryptophan from chorismate: step 2/5. Catalyzes the transfer of the phosphoribosyl group of 5-phosphorylribose-1-pyrophosphate (PRPP) to anthranilate to yield N-(5'-phosphoribosyl)-anthranilate (PRA). The polypeptide is Anthranilate phosphoribosyltransferase (Gluconobacter oxydans (strain 621H) (Gluconobacter suboxydans)).